The chain runs to 2057 residues: Myosin heavy chain, non-muscle (2057 aa).

In terms of domain architecture, Myosin N-terminal SH3-like spans H78–P128. Residues D132 to D867 form the Myosin motor domain. G225–T232 serves as a coordination point for ATP. Positions P250–A260 are 25 kDa/50 kDa junction. The segment at D722 to F734 is 50 kDa/20 kDa junction. Residues L745 to H767 are actin-binding. The reactive sulfhydryl/actin-binding stretch occupies residues Q782–G798. Residues I870–A899 enclose the IQ domain. The stretch at K926–G2016 forms a coiled coil. Disordered regions lie at residues E1124–I1144, S1782–A1802, and L2008–N2057. The alpha-helical tailpiece (LMM) stretch occupies residues S1343–T2010. The tract at residues S1343 to N2057 is light meromyosin (LMM). A compositionally biased stretch (basic and acidic residues) spans S1782 to T1792. A globular tailpiece region spans residues K2011–N2057. Phosphoserine is present on residues S2021 and S2022. Residues S2044 to N2057 are compositionally biased toward acidic residues.

Belongs to the TRAFAC class myosin-kinesin ATPase superfamily. Myosin family. Interacts with sau. Interacts with ck and Ubr3. Ubiquitinated. As to expression, in Johnston's organ, expressed in neurons and scolopale cells.

The protein localises to the cell projection. Its subcellular location is the cilium. It is found in the cytoplasm. Functionally, nonmuscle myosin appears to be responsible for cellularization. Required for morphogenesis and cytokinesis. Necessary for auditory transduction: plays a role in Johnston's organ organization by acting in scolopidial apical attachment. Interaction with the myosin ck may be important for this function. Localizes to and defines the trailing edge of cells during larval epidermal wound healing. This process is dependent on the phosphatidylinositol 4-phosphate 5-kinase sktl/skittles. This Drosophila melanogaster (Fruit fly) protein is Myosin heavy chain, non-muscle (zip).